Consider the following 375-residue polypeptide: Flagellin (375 aa).

The protein belongs to the bacterial flagellin family.

It is found in the secreted. The protein localises to the bacterial flagellum. Flagellin is the subunit protein which polymerizes to form the filaments of bacterial flagella. Flagella are an important component in the invasiveness of B.bacilliformis. The sequence is that of Flagellin from Bartonella bacilliformis.